Consider the following 891-residue polypeptide: Schlafen family member 5 (891 aa).

Residue Lys-59 forms a Glycyl lysine isopeptide (Lys-Gly) (interchain with G-Cter in SUMO2) linkage. Position 578 to 585 (578 to 585 (GLPGSGKT)) interacts with ATP.

The protein belongs to the Schlafen family. Subgroup III subfamily.

In terms of biological role, may have a role in hematopoietic cell differentiation. This chain is Schlafen family member 5 (SLFN5), found in Homo sapiens (Human).